The sequence spans 471 residues: uncharacterized protein (471 aa).

4 helical membrane-spanning segments follow: residues 10-30 (ALWLLDFLTFNISFLLSLFVI), 46-66 (IDDRTYIHAVLAGICVGWFAI), 87-107 (TLIIFAIFELAIVAFPKLYFS), and 280-300 (IVVGSLAIIIFSPVLLYLYFA).

This sequence belongs to the bacterial sugar transferase family.

The protein resides in the cell membrane. It participates in glycan metabolism; exopolysaccharide biosynthesis. May function as a sugar transferase. This is an uncharacterized protein from Haemophilus influenzae (strain ATCC 51907 / DSM 11121 / KW20 / Rd).